A 101-amino-acid chain; its full sequence is Protein RADIALIS-like 2 (101 aa).

The 56-residue stretch at 9 to 64 folds into the SANT domain; that stretch reads YGSGSWTVKQNKAFERALAVYDQDTPDRWHNVARAVGGKTPEEAKRQYDLLVRDIE. The disordered stretch occupies residues 69-101; sequence GHVPFPDYKTTTGNSNRGRLRDEEKRMRSMKLQ.

In terms of tissue distribution, expressed in the funiculus of ovules and in embryos. In young ovules, expression is observed in the adaxial side of the funiculus (the stalk connecting the embryo sac to the placenta). Also expressed in heart-stage embryos, in the cortex and endodermis of the hypocotyl region but not in the cotyledons, shoot and root apical meristems, provasculature or epidermis. Not detected in young seedlings, mature roots or in young floral primordia.

Its subcellular location is the nucleus. Probable transcription factor. Required for female gametophyte development. This chain is Protein RADIALIS-like 2 (RL2), found in Arabidopsis thaliana (Mouse-ear cress).